We begin with the raw amino-acid sequence, 443 residues long: Light-independent protochlorophyllide reductase subunit N (443 aa).

The [4Fe-4S] cluster site is built by Cys15, Cys40, and Cys99.

It belongs to the BchN/ChlN family. Protochlorophyllide reductase is composed of three subunits; BchL, BchN and BchB. Forms a heterotetramer of two BchB and two BchN subunits. Requires [4Fe-4S] cluster as cofactor.

The catalysed reaction is chlorophyllide a + oxidized 2[4Fe-4S]-[ferredoxin] + 2 ADP + 2 phosphate = protochlorophyllide a + reduced 2[4Fe-4S]-[ferredoxin] + 2 ATP + 2 H2O. It participates in porphyrin-containing compound metabolism; bacteriochlorophyll biosynthesis (light-independent). Component of the dark-operative protochlorophyllide reductase (DPOR) that uses Mg-ATP and reduced ferredoxin to reduce ring D of protochlorophyllide (Pchlide) to form chlorophyllide a (Chlide). This reaction is light-independent. The NB-protein (BchN-BchB) is the catalytic component of the complex. This is Light-independent protochlorophyllide reductase subunit N from Heliobacterium modesticaldum (strain ATCC 51547 / Ice1).